The chain runs to 340 residues: Ubiquitin-like domain-containing CTD phosphatase (340 aa).

In terms of domain architecture, Ubiquitin-like spans 24–101 (LTLTVKWNGK…MTMIGTVEDD (78 aa)). Residues 151-312 (CRQGKKLLVL…VKLTQYLLTI (162 aa)) enclose the FCP1 homology domain. Positions 151 to 312 (CRQGKKLLVL…VKLTQYLLTI (162 aa)) are phosphatase. Mg(2+)-binding residues include D161, D163, and D271.

Mg(2+) is required as a cofactor.

It localises to the nucleus. It catalyses the reaction O-phospho-L-seryl-[protein] + H2O = L-seryl-[protein] + phosphate. The enzyme catalyses O-phospho-L-threonyl-[protein] + H2O = L-threonyl-[protein] + phosphate. Its function is as follows. Dephosphorylates 26S nuclear proteasomes, thereby decreasing their proteolytic activity. The dephosphorylation may prevent assembly of the core and regulatory particles (CP and RP) into mature 26S proteasome. The sequence is that of Ubiquitin-like domain-containing CTD phosphatase from Arabidopsis thaliana (Mouse-ear cress).